A 507-amino-acid chain; its full sequence is Probable malate:quinone oxidoreductase 2 (507 aa).

This sequence belongs to the MQO family. It depends on FAD as a cofactor.

It carries out the reaction (S)-malate + a quinone = a quinol + oxaloacetate. Its pathway is carbohydrate metabolism; tricarboxylic acid cycle; oxaloacetate from (S)-malate (quinone route): step 1/1. This is Probable malate:quinone oxidoreductase 2 from Pseudomonas aeruginosa (strain ATCC 15692 / DSM 22644 / CIP 104116 / JCM 14847 / LMG 12228 / 1C / PRS 101 / PAO1).